The sequence spans 240 residues: Probable transcriptional regulatory protein OEOE_0768 (240 aa).

The interval 1-21 (MSGHSKWHNIQGRKNAQDAKR) is disordered.

This sequence belongs to the TACO1 family.

The protein resides in the cytoplasm. In Oenococcus oeni (strain ATCC BAA-331 / PSU-1), this protein is Probable transcriptional regulatory protein OEOE_0768.